The following is a 519-amino-acid chain: Iroquois-class homeodomain protein IRX-4 (519 aa).

A DNA-binding region (homeobox; TALE-type) is located at residues 143-204 (GTRRKNATRE…NARRRLKKEN (62 aa)). Residues 204–298 (NKMTWPPRNK…VPAAPDGPVK (95 aa)) are disordered. Residues 213–222 (KCADEKRPYA) are compositionally biased toward basic and acidic residues. Composition is skewed to acidic residues over residues 223–235 (EGEEEEGGEEEAR) and 257–267 (LSDLDDFDPLE).

Belongs to the TALE/IRO homeobox family. In terms of assembly, interacts with the vitamin D receptor VDR but doesn't affect its transactivation activity. Predominantly expressed in cardiac ventricles.

The protein resides in the nucleus. In terms of biological role, likely to be an important mediator of ventricular differentiation during cardiac development. In Homo sapiens (Human), this protein is Iroquois-class homeodomain protein IRX-4 (IRX4).